The chain runs to 836 residues: Protein O-mannosyl-transferase TMTC2 (836 aa).

Residues 1-21 form a helical membrane-spanning segment; it reads MIAELVSSALGLALYLNTLSA. Residues 22 to 77 are Extracellular-facing; sequence DFCYDDSRAIKTNQDLLPETPWTHIFYNDFWGTLLTHSGSHKSYRPLCTLSFRLNH. The helical transmembrane segment at 78-98 threads the bilayer; it reads AIGGLNPWSYHLVNVLLHAAV. Over 99-107 the chain is Cytoplasmic; that stretch reads TGLFTRFSK. A helical transmembrane segment spans residues 108–128; it reads ALLGDGYWTFMAGLMFASHPI. The Extracellular segment spans residues 129–132; the sequence is HTEA. Residues 133-153 traverse the membrane as a helical segment; sequence VAGIVGRADVGASLFFLLSLL. Over 154 to 168 the chain is Cytoplasmic; the sequence is CYIKHCSTRGYSART. 2 helical membrane-spanning segments follow: residues 169–184 and 185–204; these read WGWFLGTGLCAGCSML and WKEQGVTVLAVSAVYDVFVF. Residues 205–220 are Cytoplasmic-facing; the sequence is HRLKMKQILPTIYKRK. Residues 221–241 traverse the membrane as a helical segment; that stretch reads NLSLFLSISLLTFWGTCLLGA. Residues 242–312 are Extracellular-facing; it reads RLYWMGNKPP…KTVCDWRNLH (71 aa). The helical transmembrane segment at 313–333 threads the bilayer; sequence TVAFYSGLLLLAYCGLKNPSL. Residues 334-392 lie on the Cytoplasmic side of the membrane; the sequence is EGECNGKALTNGKQNANGHSCHSDVEYRNSEMKPSFASKVENGIKNCVPQRTQLPSTEN. A helical membrane pass occupies residues 393-415; sequence IVILSLSLLIIPFIPATNLFFYV. At 416 to 422 the chain is on the extracellular side; it reads GFVIAER. A helical transmembrane segment spans residues 423 to 443; it reads VLYIPSMGFCLLITVGARALY. Topologically, residues 444–449 are cytoplasmic; the sequence is VKVQKR. Residues 450–470 form a helical membrane-spanning segment; the sequence is FLKSLVFYATATLIVFYGVKT. Residues 471 to 836 are Extracellular-facing; the sequence is AIRNGDWQNE…EKQGLKTSKT (366 aa). TPR repeat units follow at residues 493 to 526, 527 to 560, 561 to 594, 606 to 639, 643 to 676, 677 to 710, 711 to 744, 745 to 778, and 779 to 812; these read AKAWGNLGNVLKSQSKISEAESAYRNALFYRSNM, ADMLYNLGLLLQENSRFAEALHYYKLAIGSRPTL, ASAYLNTGIILMNQGKTEEARRTFLKCSEIPDEN, TSCLYNLGKLYHEQGRYEEALSVYREAIQKMPRH, QSLYNMMGEAYMRLSKLPEAEHWYMESLRSKTDH, IPAHLTYGKLLALTGRKSEAEKFFLKAIELDPTK, GNCYMHYGQFLLEESRLTEAAEMAKKAAELDNTE, FDVVFNAAHMLRQASLNEAAEKYYDLAARLRPNY, and PAALMNLGAILHLNGRLQKAEANYLRALQLKPDD.

Belongs to the TMTC family.

The protein resides in the membrane. It localises to the endoplasmic reticulum. It carries out the reaction a di-trans,poly-cis-dolichyl beta-D-mannosyl phosphate + L-seryl-[protein] = 3-O-(alpha-D-mannosyl)-L-seryl-[protein] + a di-trans,poly-cis-dolichyl phosphate + H(+). The enzyme catalyses a di-trans,poly-cis-dolichyl beta-D-mannosyl phosphate + L-threonyl-[protein] = 3-O-(alpha-D-mannosyl)-L-threonyl-[protein] + a di-trans,poly-cis-dolichyl phosphate + H(+). It functions in the pathway protein modification; protein glycosylation. In terms of biological role, transfers mannosyl residues to the hydroxyl group of serine or threonine residues. The 4 members of the TMTC family are O-mannosyl-transferases dedicated primarily to the cadherin superfamily, each member seems to have a distinct role in decorating the cadherin domains with O-linked mannose glycans at specific regions. Also acts as O-mannosyl-transferase on other proteins such as PDIA3. In Mus musculus (Mouse), this protein is Protein O-mannosyl-transferase TMTC2.